A 4128-amino-acid chain; its full sequence is DNA-dependent protein kinase catalytic subunit (4128 aa).

Position 117 is an N6-acetyllysine (Lys-117). One copy of the HEAT 1 repeat lies at 288–323 (DNYITLFEVLSKWCSHTNVELKKAAHSALESFLRQI). Residues Ser-511, Ser-686, Ser-840, and Ser-891 each carry the phosphoserine modification. HEAT repeat units lie at residues 1001–1037 (QDTV…LKWS) and 1050–1086 (PVNS…YKEF). Ser-1062 bears the Phosphoserine mark. Lys-1206 bears the N6-acetyllysine mark. Positions 1501 to 1536 (LDPSCKSLANGLLELAFGFGGLCDHLVSLLLNSAML) are interaction with C1D. Positions 1501–1536 (LDPSCKSLANGLLELAFGFGGLCDHLVSLLLNSAML) are leucine-zipper. A TPR 1 repeat occupies 1720–1753 (PMKSDEFPPDSLKYNNYVDCMKKFLDALELSQSP). Lys-1967 bears the N6-acetyllysine mark. Residues 2049–2071 (YSYSSQDRKPTTGHFQRREHQDS) form a disordered region. Position 2053 is a phosphoserine; by autocatalysis (Ser-2053). Residues 2054-2070 (QDRKPTTGHFQRREHQD) show a composition bias toward basic and acidic residues. The residue at position 2255 (Lys-2255) is an N6-acetyllysine. The segment at 2432–3213 (LDIVYKMVAK…DHSMSVDEDE (782 aa)) is KIP-binding. Position 2531 is a phosphothreonine (Thr-2531). Position 2605 is a phosphothreonine; by autocatalysis (Thr-2605). Ser-2608 is modified (phosphoserine; by autocatalysis). The segment at 2614 to 2635 (TQTQEGPLSDQRQKPGQVRATQ) is disordered. Thr-2634 and Thr-2643 each carry phosphothreonine; by autocatalysis. Positions 2738 to 2766 (EKLSLLYAKRGLMEQKLEKDIKSEFKMKQ) are may split the end of the DNA molecule, with the two strands separating around the region. The 633-residue stretch at 2907–3539 (PTKRVRGKTC…IYPFIISSES (633 aa)) folds into the FAT domain. TPR repeat units follow at residues 2921–2954 (VLRW…TQDT) and 2956–2983 (NALL…LEWV). Ser-3206 carries the post-translational modification Phosphoserine. N6-acetyllysine occurs at positions 3241, 3260, 3638, and 3642. Residues 3722–4053 (FDERVKVMLS…IRYAKRKLAG (332 aa)) form the PI3K/PI4K catalytic domain. The segment at 3728–3734 (VMLSLRK) is G-loop. A phosphoserine mark is found at Ser-3731 and Ser-3821. The interval 3919–3927 (GIGDRHLNN) is catalytic loop. The activation loop stretch occupies residues 3939 to 3964 (GIDFGHAFGSATQFLPVPELMPFRLT). Ser-4026 is subject to Phosphoserine. One can recognise an FATC domain in the interval 4096-4128 (SGLSEETQVKCLVDQATDPNILGRTWEGWEPWM).

It belongs to the PI3/PI4-kinase family. DNA-PK is a heterotrimer of PRKDC and the Ku dimer (composed of XRCC6/Ku70 and XRCC5/Ku86). Formation of this complex may be promoted by interaction with ILF3. Component of the core long-range non-homologous end joining (NHEJ) complex (also named DNA-PK complex) composed of PRKDC, LIG4, XRCC4, XRCC6/Ku70, XRCC5/Ku86 and NHEJ1/XLF. Additional component of the NHEJ complex includes PAXX. Following autophosphorylation, PRKDC dissociates from DNA. Interacts with DNA-PKcs-interacting protein (KIP) with the region upstream the kinase domain. PRKDC alone also interacts with and phosphorylates DCLRE1C, thereby activating the latent endonuclease activity of this protein. Interacts with C1D. Interacts with TTI1 and TELO2. Interacts with CIB1. Interacts with SETX. Interacts with NR4A3; the DNA-dependent protein kinase complex DNA-PK phosphorylates and activates NR4A3 and prevents NR4A3 ubiquitination and degradation. Interacts with BRAT1. Part of the HDP-RNP complex composed of at least HEXIM1, PRKDC, XRCC5, XRCC6, paraspeckle proteins (SFPQ, NONO, PSPC1, RBM14, and MATR3) and NEAT1 RNA. Interacts with KAT5. Post-translationally, autophosphorylated at two clusters, the T2609 cluster and the S2056 cluster. Autophosphorylated on Ser-2053, Thr-2605, Thr-2634 and Thr-2643. Ser-2053 and Thr-2605 are DNA damage-inducible phosphorylation sites (inducible with ionizing radiation, IR) dephosphorylated by PPP5C. Autophosphorylation induces a conformational change that leads to remodeling of the DNA-PK complex, requisite for efficient end processing and DNA repair. Autophosphorylation in trans within DNA-PK complexes loaded on DNA ends leads to the dissociation of PRKDC from DNA and the transition into the short-range NHEJ complex. Autophosphorylation of the T2609 cluster is required for hematopoietic development and protein synthesis in erythrocytes precursors. In terms of processing, S-nitrosylated by GAPDH. Polyubiquitinated by RNF144A, leading to proteasomal degradation.

It is found in the nucleus. The protein localises to the nucleolus. It localises to the cytoplasm. The protein resides in the cytosol. It carries out the reaction L-seryl-[protein] + ATP = O-phospho-L-seryl-[protein] + ADP + H(+). The enzyme catalyses L-threonyl-[protein] + ATP = O-phospho-L-threonyl-[protein] + ADP + H(+). Activity seems to be attenuated by autophosphorylation. Binding to the SL1 region of U3 small nucleolar RNA promotes auto-phosphorylation activity. Inhibited by wortmannin. Serine/threonine-protein kinase that acts as a molecular sensor for DNA damage. Involved in DNA non-homologous end joining (NHEJ) required for double-strand break (DSB) repair and V(D)J recombination. Must be bound to DNA to express its catalytic properties. Promotes processing of hairpin DNA structures in V(D)J recombination by activation of the hairpin endonuclease artemis (DCLRE1C). Recruited by XRCC5 and XRCC6 to DNA ends and is required to (1) protect and align broken ends of DNA, thereby preventing their degradation, (2) and sequester the DSB for repair by NHEJ. Acts as a scaffold protein to aid the localization of DNA repair proteins to the site of damage. The assembly of the DNA-PK complex at DNA ends is also required for the NHEJ ligation step. Found at the ends of chromosomes, suggesting a further role in the maintenance of telomeric stability and the prevention of chromosomal end fusion. Also involved in modulation of transcription. As part of the DNA-PK complex, involved in the early steps of ribosome assembly by promoting the processing of precursor rRNA into mature 18S rRNA in the small-subunit processome. Binding to U3 small nucleolar RNA, recruits PRKDC and XRCC5/Ku86 to the small-subunit processome. Recognizes the substrate consensus sequence [ST]-Q. Phosphorylates 'Ser-139' of histone variant H2AX, thereby regulating DNA damage response mechanism. Phosphorylates ASF1A, DCLRE1C, c-Abl/ABL1, histone H1, HSPCA, c-jun/JUN, p53/TP53, PARP1, POU2F1, DHX9, FH, SRF, NHEJ1/XLF, XRCC1, XRCC4, XRCC5, XRCC6, WRN, MYC and RFA2. Can phosphorylate C1D not only in the presence of linear DNA but also in the presence of supercoiled DNA. Ability to phosphorylate p53/TP53 in the presence of supercoiled DNA is dependent on C1D. Acts as a regulator of the phosphatidylinositol 3-kinase/protein kinase B signal transduction by mediating phosphorylation of 'Ser-473' of protein kinase B (PKB/AKT1, PKB/AKT2, PKB/AKT3), promoting their activation. Contributes to the determination of the circadian period length by antagonizing phosphorylation of CRY1 'Ser-588' and increasing CRY1 protein stability, most likely through an indirect mechanism. Plays a role in the regulation of DNA virus-mediated innate immune response by assembling into the HDP-RNP complex, a complex that serves as a platform for IRF3 phosphorylation and subsequent innate immune response activation through the cGAS-STING pathway. Also regulates the cGAS-STING pathway by catalyzing phosphorylation of CGAS, thereby impairing CGAS oligomerization and activation. Also regulates the cGAS-STING pathway by mediating phosphorylation of PARP1. In Mus musculus (Mouse), this protein is DNA-dependent protein kinase catalytic subunit (Prkdc).